Reading from the N-terminus, the 284-residue chain is MNQTTTFDKLCNYSAACLANWQGKTIVVKYGGNAMISAELKQTVMQNILLLNQYGINVVLVHGGGPEISLGMKLLGKEPQFINGLRVTDQDTIDVVLQMLAGKVNKRLVALLKGKGIGLCGIDGGLIQCEKLEAELDYGLVGNIVQVDITVLQMALAANLIPVIAAVAVDQQGIIYNVNADTVASEIAVALGADKLVLMTDIAGLLADRNDERSLMSRVEVSQVETLIAQGIISDGMIPKVASCTRFINAGGIEAHIIDGRIKHAILLSILSDKQNGTRFYKEK.

Substrate-binding positions include 64-65 (GG), Arg86, and Asn177.

It belongs to the acetylglutamate kinase family. ArgB subfamily.

It is found in the cytoplasm. It carries out the reaction N-acetyl-L-glutamate + ATP = N-acetyl-L-glutamyl 5-phosphate + ADP. It functions in the pathway amino-acid biosynthesis; L-arginine biosynthesis; N(2)-acetyl-L-ornithine from L-glutamate: step 2/4. Functionally, catalyzes the ATP-dependent phosphorylation of N-acetyl-L-glutamate. This Haemophilus ducreyi (strain 35000HP / ATCC 700724) protein is Acetylglutamate kinase.